The following is a 436-amino-acid chain: ATP-dependent RNA helicase SUB2 (436 aa).

Over residues 1–16 (MSAEEDLIDYSDEELN) the composition is skewed to acidic residues. A disordered region spans residues 1-33 (MSAEEDLIDYSDEELNTNETAAPAADSNGKKGE). The short motif at 52-80 (TGFRDFLLKPELLRAIGDCGFEHPSEVQQ) is the Q motif element. A Helicase ATP-binding domain is found at 83 to 258 (IPQAMLGGDI…KKFMQNPTEH (176 aa)). Position 96-103 (96-103 (AKSGLGKT)) interacts with ATP. The short motif at 205 to 208 (DECD) is the DEAD box element. Positions 270 to 431 (GLQQYFVALE…EFPKDGIDAS (162 aa)) constitute a Helicase C-terminal domain.

The protein belongs to the DEAD box helicase family. DECD subfamily.

The protein resides in the nucleus. The catalysed reaction is ATP + H2O = ADP + phosphate + H(+). Functionally, ATP-binding RNA helicase involved in transcription elongation and required for the export of mRNA out of the nucleus. SUB2 also plays a role in pre-mRNA splicing and spliceosome assembly. May be involved in rDNA and telomeric silencing, and maintenance of genome integrity. This Pyricularia oryzae (strain 70-15 / ATCC MYA-4617 / FGSC 8958) (Rice blast fungus) protein is ATP-dependent RNA helicase SUB2 (SUB2).